An 880-amino-acid polypeptide reads, in one-letter code: Alanine--tRNA ligase (880 aa).

Positions 571, 575, 673, and 677 each coordinate Zn(2+).

The protein belongs to the class-II aminoacyl-tRNA synthetase family. Zn(2+) is required as a cofactor.

The protein localises to the cytoplasm. It carries out the reaction tRNA(Ala) + L-alanine + ATP = L-alanyl-tRNA(Ala) + AMP + diphosphate. Functionally, catalyzes the attachment of alanine to tRNA(Ala) in a two-step reaction: alanine is first activated by ATP to form Ala-AMP and then transferred to the acceptor end of tRNA(Ala). Also edits incorrectly charged Ser-tRNA(Ala) and Gly-tRNA(Ala) via its editing domain. The polypeptide is Alanine--tRNA ligase (Oleidesulfovibrio alaskensis (strain ATCC BAA-1058 / DSM 17464 / G20) (Desulfovibrio alaskensis)).